The primary structure comprises 183 residues: NADH-quinone oxidoreductase subunit A (183 aa).

3 helical membrane passes run 11 to 31 (IIAF…VPLL), 63 to 83 (FYLV…LYAW), and 98 to 118 (VVIF…VGAL). The disordered stretch occupies residues 159 to 183 (TGQIPAQSSGRVKSKTTPALSSEKE).

This sequence belongs to the complex I subunit 3 family. As to quaternary structure, NDH-1 is composed of 14 different subunits. Subunits NuoA, H, J, K, L, M, N constitute the membrane sector of the complex.

The protein localises to the cell inner membrane. It catalyses the reaction a quinone + NADH + 5 H(+)(in) = a quinol + NAD(+) + 4 H(+)(out). Its function is as follows. NDH-1 shuttles electrons from NADH, via FMN and iron-sulfur (Fe-S) centers, to quinones in the respiratory chain. The immediate electron acceptor for the enzyme in this species is believed to be ubiquinone. Couples the redox reaction to proton translocation (for every two electrons transferred, four hydrogen ions are translocated across the cytoplasmic membrane), and thus conserves the redox energy in a proton gradient. In Acinetobacter baumannii (strain ACICU), this protein is NADH-quinone oxidoreductase subunit A.